The chain runs to 218 residues: Protein N-lysine methyltransferase METTL21A (218 aa).

S-adenosyl-L-methionine-binding positions include Trp-47, 73-75 (GAG), Asp-94, Trp-125, and Ala-143.

This sequence belongs to the methyltransferase superfamily. METTL21 family. Interacts with heat shock 70 family members; at least some of these proteins are methylation substrates.

It localises to the cytoplasm. It carries out the reaction L-lysyl-[protein] + 3 S-adenosyl-L-methionine = N(6),N(6),N(6)-trimethyl-L-lysyl-[protein] + 3 S-adenosyl-L-homocysteine + 3 H(+). Functionally, protein-lysine methyltransferase that selectively trimethylates residues in heat shock protein 70 (HSP70) family members. Contributes to the in vivo trimethylation of Lys residues in HSPA1 and HSPA8. In vitro methylates 'Lys-561' in HSPA1, 'Lys-564' in HSPA2, 'Lys-585' in HSPA5, 'Lys-563' in HSPA6 and 'Lys-561' in HSPA8. This is Protein N-lysine methyltransferase METTL21A (Mettl21A) from Mus musculus (Mouse).